The primary structure comprises 251 residues: RNA polymerase sigma factor SigI (251 aa).

Residues 61 to 74 (DEFSIGLIAFNEAI) carry the Polymerase core binding motif. Residues 206–225 (VKQLEQLVSVSRKTIERNRK) constitute a DNA-binding region (H-T-H motif).

This sequence belongs to the sigma-70 factor family. SigI subfamily. As to quaternary structure, interacts with RsgI.

It is found in the cytoplasm. Its activity is regulated as follows. Negatively regulated by the anti-sigma-I factor RsgI. Upon exposure to heat, SigI is released from RsgI and activated. Transient heat activation of SigI may depend upon DnaK chaperone. Sigma factors are initiation factors that promote the attachment of RNA polymerase to specific initiation sites and are then released. This sigma factor is involved in regulation of cell wall metabolism in response to heat stress. Acts by regulating the expression of genes such as bcrC, mreBH and lytE. Also plays a role in survival at low temperatures. The polypeptide is RNA polymerase sigma factor SigI (Bacillus subtilis (strain 168)).